The primary structure comprises 914 residues: Protein translocase subunit SecA (914 aa).

Residues Gln-87, 105–109 (GEGKT), and Asp-508 contribute to the ATP site. Zn(2+) is bound by residues Cys-898, Cys-900, Cys-909, and His-910.

This sequence belongs to the SecA family. In terms of assembly, monomer and homodimer. Part of the essential Sec protein translocation apparatus which comprises SecA, SecYEG and auxiliary proteins SecDF-YajC and YidC. It depends on Zn(2+) as a cofactor.

The protein localises to the cell inner membrane. The protein resides in the cytoplasm. It catalyses the reaction ATP + H2O + cellular proteinSide 1 = ADP + phosphate + cellular proteinSide 2.. In terms of biological role, part of the Sec protein translocase complex. Interacts with the SecYEG preprotein conducting channel. Has a central role in coupling the hydrolysis of ATP to the transfer of proteins into and across the cell membrane, serving both as a receptor for the preprotein-SecB complex and as an ATP-driven molecular motor driving the stepwise translocation of polypeptide chains across the membrane. The sequence is that of Protein translocase subunit SecA from Xylella fastidiosa (strain M12).